The primary structure comprises 257 residues: Undecaprenyl-diphosphatase (257 aa).

A run of 8 helical transmembrane segments spans residues 4–24 (LIRVVILAIVQGIAEFLPISS), 41–61 (SVTLEIILHAGTLGSILVVFW), 74–94 (VIGLLVIGTLPAVVIGLTIKT), 103–123 (PLLAGAMLIVTGVMLIVLGRL), 133–153 (LGLGAAFLVGCFQAFAILPGI), 173–193 (SVTFSFLLAIPAILGATVLAI), 209–229 (VLSIGAAVAFAVGIVALKWLI), and 236–256 (RLHWFAYWCIPAGLLVVLLNL).

This sequence belongs to the UppP family.

It localises to the cell inner membrane. It catalyses the reaction di-trans,octa-cis-undecaprenyl diphosphate + H2O = di-trans,octa-cis-undecaprenyl phosphate + phosphate + H(+). Its function is as follows. Catalyzes the dephosphorylation of undecaprenyl diphosphate (UPP). Confers resistance to bacitracin. In Rhodopirellula baltica (strain DSM 10527 / NCIMB 13988 / SH1), this protein is Undecaprenyl-diphosphatase.